A 378-amino-acid polypeptide reads, in one-letter code: Chaperone protein DnaJ 2 (378 aa).

The region spanning 4–68 is the J domain; the sequence is DYYAVLGVRR…QKKQVYDLGG (65 aa). Residues 130-212 form a CR-type zinc finger; sequence GTTKDIQVDT…CAGDGRVRSR (83 aa). Residues Cys-143, Cys-146, Cys-160, Cys-163, Cys-186, Cys-189, Cys-200, and Cys-203 each coordinate Zn(2+). CXXCXGXG motif repeat units follow at residues 143-150, 160-167, 186-193, and 200-207; these read CNTCNGEG, CDMCRGRG, CPQCQGFG, and CPECAGDG. Disordered regions lie at residues 297–319 and 351–378; these read RPGT…LRGG and RGEE…FNGR. Positions 358–367 are enriched in polar residues; the sequence is GQFQPGQQGL.

Belongs to the DnaJ family. Homodimer. Zn(2+) is required as a cofactor.

It localises to the cytoplasm. Functionally, participates actively in the response to hyperosmotic and heat shock by preventing the aggregation of stress-denatured proteins and by disaggregating proteins, also in an autonomous, DnaK-independent fashion. Unfolded proteins bind initially to DnaJ; upon interaction with the DnaJ-bound protein, DnaK hydrolyzes its bound ATP, resulting in the formation of a stable complex. GrpE releases ADP from DnaK; ATP binding to DnaK triggers the release of the substrate protein, thus completing the reaction cycle. Several rounds of ATP-dependent interactions between DnaJ, DnaK and GrpE are required for fully efficient folding. Also involved, together with DnaK and GrpE, in the DNA replication of plasmids through activation of initiation proteins. The chain is Chaperone protein DnaJ 2 from Streptomyces coelicolor (strain ATCC BAA-471 / A3(2) / M145).